Reading from the N-terminus, the 152-residue chain is Transmembrane protein 35B (152 aa).

A signal peptide spans 1 to 21 (MLVSLGALRVLLGIFFTLTGA). The next 3 membrane-spanning stretches (helical) occupy residues 62-82 (AAVGWLELLAGLLLVVGPPVL), 85-105 (ISNVLLILLMMGAVFTLVVLE), and 111-131 (YIPAVVCLGLLLLLDSCQFLV).

Belongs to the DoxX family.

It localises to the membrane. This chain is Transmembrane protein 35B, found in Rattus norvegicus (Rat).